Consider the following 528-residue polypeptide: GMP synthase [glutamine-hydrolyzing] (528 aa).

The Glutamine amidotransferase type-1 domain maps to Ser-13–Asp-204. Cys-90 functions as the Nucleophile in the catalytic mechanism. Residues His-178 and Glu-180 contribute to the active site. One can recognise a GMPS ATP-PPase domain in the interval Trp-205–Arg-403. Ser-232–Ser-238 lines the ATP pocket.

Homodimer.

The catalysed reaction is XMP + L-glutamine + ATP + H2O = GMP + L-glutamate + AMP + diphosphate + 2 H(+). It participates in purine metabolism; GMP biosynthesis; GMP from XMP (L-Gln route): step 1/1. Functionally, catalyzes the synthesis of GMP from XMP. The chain is GMP synthase [glutamine-hydrolyzing] from Prochlorococcus marinus (strain MIT 9515).